The chain runs to 165 residues: Cyclic pyranopterin monophosphate synthase (165 aa).

Substrate-binding positions include 83–85 (FCH) and 120–121 (ME). Residue Asp135 is part of the active site.

It belongs to the MoaC family. As to quaternary structure, homohexamer; trimer of dimers.

It catalyses the reaction (8S)-3',8-cyclo-7,8-dihydroguanosine 5'-triphosphate = cyclic pyranopterin phosphate + diphosphate. It participates in cofactor biosynthesis; molybdopterin biosynthesis. Catalyzes the conversion of (8S)-3',8-cyclo-7,8-dihydroguanosine 5'-triphosphate to cyclic pyranopterin monophosphate (cPMP). This Xanthomonas campestris pv. campestris (strain B100) protein is Cyclic pyranopterin monophosphate synthase.